An 877-amino-acid chain; its full sequence is DNA repair protein rad16 (877 aa).

Ser71 carries the phosphoserine; by CK2 modification. Positions 440-490 (SKSIKKPEPSKEREASNTTSRKGVPPSKRRRVRGGNNATSRTTSDNTDAND) are disordered. Basic and acidic residues predominate over residues 444–454 (KKPEPSKEREA). The segment covering 475–490 (NNATSRTTSDNTDAND) has biased composition (polar residues). Residues 652 to 732 (RVIVDLREFR…IPVLLIEFEQ (81 aa)) enclose the ERCC4 domain.

This sequence belongs to the XPF family. In terms of assembly, heterodimer composed of rad16 and swi10.

The protein resides in the nucleus. It localises to the cytoplasm. It is found in the cytoskeleton. The protein localises to the microtubule organizing center. Its subcellular location is the spindle pole body. Functionally, endonuclease that specifically degrades single-stranded DNA and which is involved in nucleotide excision repair of DNA damaged with UV light, bulky adducts, or cross-linking agents. Required for double strand break-induced interchromosomal gene conversion. In Schizosaccharomyces pombe (strain 972 / ATCC 24843) (Fission yeast), this protein is DNA repair protein rad16 (rad16).